A 1177-amino-acid polypeptide reads, in one-letter code: uncharacterized protein (1177 aa).

Residues 1–26 form the signal peptide; that stretch reads MKKLLKKSKFWWFLLCGLSVSTILVA. A lipid anchor (N-palmitoyl cysteine) is attached at Cys-27. Cys-27 is lipidated: S-diacylglycerol cysteine.

It belongs to the MG307/MG309/MG338 family.

It localises to the cell membrane. This is an uncharacterized protein from Mycoplasma genitalium (strain ATCC 33530 / DSM 19775 / NCTC 10195 / G37) (Mycoplasmoides genitalium).